Here is a 412-residue protein sequence, read N- to C-terminus: Serine hydroxymethyltransferase (412 aa).

(6S)-5,6,7,8-tetrahydrofolate contacts are provided by residues leucine 112 and 116 to 118 (GHL). An N6-(pyridoxal phosphate)lysine modification is found at lysine 221. Glutamate 237 serves as a coordination point for (6S)-5,6,7,8-tetrahydrofolate.

It belongs to the SHMT family. As to quaternary structure, homodimer. The cofactor is pyridoxal 5'-phosphate.

It localises to the cytoplasm. The enzyme catalyses (6R)-5,10-methylene-5,6,7,8-tetrahydrofolate + glycine + H2O = (6S)-5,6,7,8-tetrahydrofolate + L-serine. The protein operates within one-carbon metabolism; tetrahydrofolate interconversion. Its pathway is amino-acid biosynthesis; glycine biosynthesis; glycine from L-serine: step 1/1. Catalyzes the reversible interconversion of serine and glycine with tetrahydrofolate (THF) serving as the one-carbon carrier. This reaction serves as the major source of one-carbon groups required for the biosynthesis of purines, thymidylate, methionine, and other important biomolecules. Also exhibits THF-independent aldolase activity toward beta-hydroxyamino acids, producing glycine and aldehydes, via a retro-aldol mechanism. This chain is Serine hydroxymethyltransferase, found in Malacoplasma penetrans (strain HF-2) (Mycoplasma penetrans).